Here is a 741-residue protein sequence, read N- to C-terminus: Cellulose 1,4-beta-cellobiosidase (reducing end) CelS (741 aa).

Residues 1–27 (MVKSRKISILLAVAMLVSIMIPTTAFA) form the signal peptide. Position 76 (Glu76) interacts with substrate. Catalysis depends on Glu87, which acts as the Proton donor. Residues Thr140, Asn204, Asp241, Gln247, and 251 to 252 (TN) contribute to the substrate site. Asp255 serves as the catalytic Nucleophile. Substrate is bound by residues 301–302 (KY), 326–327 (WY), Tyr421, Asp520, and 645–646 (WH). The region spanning 673–739 (STKLYGDVND…ILKEIDTLPY (67 aa)) is the Dockerin domain. Ca(2+) is bound by residues Asp679, Asn681, Asp683, Gly684, Lys685, Asp690, Asp711, Leu712, Asn713, Asp715, Arg717, and Asp722.

Belongs to the glycosyl hydrolase 48 (cellulase L) family.

Its subcellular location is the secreted. The enzyme catalyses Hydrolysis of (1-&gt;4)-beta-D-glucosidic linkages in cellulose and similar substrates, releasing cellobiose from the reducing ends of the chains.. Its activity is regulated as follows. Inhibited by cellobiose and lactose, but not by glucose. Its function is as follows. This enzyme catalyzes the exohydrolysis of 1,4-beta-glucosidic linkages in cellulose with a preference for amorphous or crystalline cellulose over carboxymethyl cellulose. The sequence is that of Cellulose 1,4-beta-cellobiosidase (reducing end) CelS (celS) from Acetivibrio thermocellus (strain ATCC 27405 / DSM 1237 / JCM 9322 / NBRC 103400 / NCIMB 10682 / NRRL B-4536 / VPI 7372) (Clostridium thermocellum).